Here is an 802-residue protein sequence, read N- to C-terminus: Protein enabled homolog (802 aa).

Residues 1 to 111 (MSEQSICQAR…SAMMHALEVL (111 aa)) enclose the WH1 domain. Over residues 143-155 (NSQLPAQVQNGPS) the composition is skewed to polar residues. A disordered region spans residues 143–166 (NSQLPAQVQNGPSQEELEIQRRQL). Ser-144 is modified (phosphoserine). Residues 154–258 (PSQEELEIQR…ERERRMSNAA (105 aa)) are a coiled coil. A run of 7 repeats spans residues 175 to 179 (LERER), 180 to 184 (MERER), 185 to 189 (LERER), 190 to 194 (LERER), 195 to 199 (LERER), 200 to 204 (LEQEQ), and 205 to 209 (LERQR). The tract at residues 175-209 (LERERMERERLERERLERERLERERLEQEQLERQR) is 7 X 5 AA tandem repeats of [LM]-E-[QR]-[EQ]-[QR]. Over residues 245-254 (QVEWERERRM) the composition is skewed to basic and acidic residues. Disordered regions lie at residues 245–287 (QVEW…PSYA) and 341–622 (ATVP…RPLT). Phosphoserine; by PKA is present on Ser-255. Low complexity predominate over residues 255–278 (SNAAPSSDSSLSSAPLPEYSSCQP). A compositionally biased stretch (polar residues) spans 348 to 361 (NKNSRPSSPVNTPS). Position 383 is a phosphoserine (Ser-383). A compositionally biased stretch (low complexity) spans 386-410 (IMISSPPGKATGPRPVLPVCVSSPV). A compositionally biased stretch (pro residues) spans 431–464 (VSPPPTSGPAAPPPPPPPPPPPPPPPLPPPPLPP). Low complexity predominate over residues 485–505 (STPSSKPSVLPSPSAGAPASA). A compositionally biased stretch (polar residues) spans 525 to 535 (AASQPAESPTP). A compositionally biased stretch (pro residues) spans 542 to 553 (PPAPPPPPPLPS). At Tyr-557 the chain carries Phosphotyrosine. Residues 561–605 (LPPPPGPPPPPPLPSTGPPPPPPPPPPLPNQAPPPPPPPPAPPLP) are compositionally biased toward pro residues. Residues 623-643 (GLAAAIAGAKLRKVSRVEDGS) form an EVH2 block A region. Residues 623-799 (GLAAAIAGAK…DAIRQELSKS (177 aa)) form an EVH2 region. The KLKR motif lies at 632–635 (KLRK). 2 disordered regions span residues 639–675 (VEDG…GGSG) and 691–764 (AEKG…TEGL). The span at 664–675 (RGNGPLPLGGSG) shows a compositional bias: gly residues. An EVH2 block B region spans residues 674 to 691 (SGLMEEMSALLARRRRIA). Positions 731–760 (RTNTMNGSKSPVISRPKSTPSSQPSANGVQ) are enriched in polar residues. A phosphoserine mark is found at Ser-738 and Ser-740. The interval 765 to 799 (DYDRLKQDILDEMRKELAKLKEELIDAIRQELSKS) is EVH2 block C. A coiled-coil region spans residues 767–797 (DRLKQDILDEMRKELAKLKEELIDAIRQELS).

The protein belongs to the Ena/VASP family. As to quaternary structure, homotetramer. Interacts with APBB1IP, APBB1, PFN1 and ROBO4. Isoforms, containing the polyproline-rich regions with PPLP motifs, bind the WW domain of APBB1IP. Isoforms, containing the PPSY motif, bind, in vitro, to the WW2 and WW3 domains of NEDD4 and to the WW1 domain of YAP1. Binds the SH3 domain of BAIAP2-alpha but only after the autoinhibitory region of BAIAP2-alpha has been blocked by interaction with CDC42. Interacts, via the EVH1/WH1 domain, with the Pro-rich domains from VCL, ZYX and Listeria monocytogenes actA and with TES (via LIM domain). The TES LIM domain and the Pro-rich domains from VCL or ZYX compete for the same binding site. Interaction with ZYX is important for targeting ENAH to focal adhesions and enhances production of actin-rich structures at the apical surface of cells. Binds GPHN. Heterotrimer with TES and ACTL7A. Interacts with FAT1 (via EVH1 domains). Interacts, through the Pro-rich region, with the C-terminal SH3 domain of DNMPB. Interacts with PRPF40A. Post-translationally, NTN1-induced PKA phosphorylation on Ser-255 directly parallels the formation of filopodial protrusions. Expressed in heart and testis, lower levels in lung, skeletal muscle, kidney, pancreas and brain. Isoform 5 is expressed exclusively in the brain. Isoform 2 is expressed predominantly in brain, testis, ovary and fat. In the brain, isoforms 2 and 5 are expressed at highest levels in the hippocampus, cortex and midbrain, and at lowest levels in the striatum and cerebellum. Isoform 6 is expressed in brain and spleen.

The protein resides in the cytoplasm. It is found in the cytoskeleton. It localises to the cell projection. Its subcellular location is the lamellipodium. The protein localises to the filopodium. The protein resides in the synapse. It is found in the cell junction. It localises to the focal adhesion. In terms of biological role, ena/VASP proteins are actin-associated proteins involved in a range of processes dependent on cytoskeleton remodeling and cell polarity such as axon guidance and lamellipodial and filopodial dynamics in migrating cells. ENAH induces the formation of F-actin rich outgrowths in fibroblasts. Acts synergistically with BAIAP2-alpha and downstream of NTN1 to promote filipodia formation. The polypeptide is Protein enabled homolog (Enah) (Mus musculus (Mouse)).